Here is a 412-residue protein sequence, read N- to C-terminus: Serine hydroxymethyltransferase (412 aa).

(6S)-5,6,7,8-tetrahydrofolate contacts are provided by residues Leu117 and 121-123 (GHL). Lys226 carries the post-translational modification N6-(pyridoxal phosphate)lysine. Glu241 contacts (6S)-5,6,7,8-tetrahydrofolate.

Belongs to the SHMT family. Homodimer. Pyridoxal 5'-phosphate is required as a cofactor.

The protein resides in the cytoplasm. It catalyses the reaction (6R)-5,10-methylene-5,6,7,8-tetrahydrofolate + glycine + H2O = (6S)-5,6,7,8-tetrahydrofolate + L-serine. It participates in one-carbon metabolism; tetrahydrofolate interconversion. Its pathway is amino-acid biosynthesis; glycine biosynthesis; glycine from L-serine: step 1/1. Catalyzes the reversible interconversion of serine and glycine with tetrahydrofolate (THF) serving as the one-carbon carrier. This reaction serves as the major source of one-carbon groups required for the biosynthesis of purines, thymidylate, methionine, and other important biomolecules. Also exhibits THF-independent aldolase activity toward beta-hydroxyamino acids, producing glycine and aldehydes, via a retro-aldol mechanism. The sequence is that of Serine hydroxymethyltransferase from Staphylococcus carnosus (strain TM300).